Consider the following 319-residue polypeptide: Epoxyqueuosine reductase (319 aa).

Residue aspartate 128 is the Proton donor of the active site. The 4Fe-4S ferredoxin-type domain maps to 173–202 (EANDPHPNYCGTCTRCLSACPTAALVEPAV). [4Fe-4S] cluster contacts are provided by cysteine 182, cysteine 185, cysteine 188, cysteine 192, cysteine 208, cysteine 236, cysteine 239, and cysteine 243.

This sequence belongs to the QueG family. Monomer. Cob(II)alamin is required as a cofactor. It depends on [4Fe-4S] cluster as a cofactor.

The protein localises to the cytoplasm. It catalyses the reaction epoxyqueuosine(34) in tRNA + AH2 = queuosine(34) in tRNA + A + H2O. It participates in tRNA modification; tRNA-queuosine biosynthesis. Catalyzes the conversion of epoxyqueuosine (oQ) to queuosine (Q), which is a hypermodified base found in the wobble positions of tRNA(Asp), tRNA(Asn), tRNA(His) and tRNA(Tyr). The sequence is that of Epoxyqueuosine reductase from Gloeobacter violaceus (strain ATCC 29082 / PCC 7421).